The chain runs to 335 residues: Lipase chaperone (335 aa).

The chain crosses the membrane as a helical span at residues 1–21; that stretch reads MSGSILLLPLAIALGLGFFIA.

The protein belongs to the lipase chaperone family.

It localises to the cell inner membrane. In terms of biological role, may be involved in the folding of the extracellular lipase during its passage through the periplasm. The sequence is that of Lipase chaperone from Stutzerimonas stutzeri (strain A1501) (Pseudomonas stutzeri).